A 557-amino-acid chain; its full sequence is IgE-binding protein (557 aa).

Residues 113–172 (DGLGKPALSSSEAGEESSSEETDWEEEAAHYQPANWSRKKPKAAGEGQFADWPQGSRLQG) are disordered. The span at 125 to 138 (AGEESSSEETDWEE) shows a compositional bias: acidic residues. Positions 344–534 (TAIRPGRRSR…TAAERHVQSQ (191 aa)) constitute an Integrase catalytic domain.

The polypeptide is IgE-binding protein (Iap) (Mus musculus (Mouse)).